Here is a 242-residue protein sequence, read N- to C-terminus: ATP synthase subunit b 2 (242 aa).

Residues 4-24 form a helical membrane-spanning segment; it reads LLAISSLTLLASLVLLVVSPA. The interval 43-74 is disordered; that stretch reads ADSEDGDHDHDHEGDDHGHDEAAGDEHGHGDG. Over residues 49-74 the composition is skewed to basic and acidic residues; sequence DHDHDHEGDDHGHDEAAGDEHGHGDG.

It belongs to the ATPase B chain family. F-type ATPases have 2 components, F(1) - the catalytic core - and F(0) - the membrane proton channel. F(1) has five subunits: alpha(3), beta(3), gamma(1), delta(1), epsilon(1). F(0) has three main subunits: a(1), b(2) and c(10-14). The alpha and beta chains form an alternating ring which encloses part of the gamma chain. F(1) is attached to F(0) by a central stalk formed by the gamma and epsilon chains, while a peripheral stalk is formed by the delta and b chains.

It localises to the cell inner membrane. Its function is as follows. F(1)F(0) ATP synthase produces ATP from ADP in the presence of a proton or sodium gradient. F-type ATPases consist of two structural domains, F(1) containing the extramembraneous catalytic core and F(0) containing the membrane proton channel, linked together by a central stalk and a peripheral stalk. During catalysis, ATP synthesis in the catalytic domain of F(1) is coupled via a rotary mechanism of the central stalk subunits to proton translocation. In terms of biological role, component of the F(0) channel, it forms part of the peripheral stalk, linking F(1) to F(0). The chain is ATP synthase subunit b 2 from Rhodopirellula baltica (strain DSM 10527 / NCIMB 13988 / SH1).